Consider the following 288-residue polypeptide: Probable sulfate transport system permease protein cysT (288 aa).

The next 7 membrane-spanning stretches (helical) occupy residues 28–48 (FLLIAALHYGILILFLPVTAL), 77–97 (FLTAALAAVINAFLGLILAWI), 111–131 (AAVDLPFALPTSVGGLTLMTV), 149–169 (IAFSRLGVLIAMMFVSLPFIV), 198–218 (FWNVLFPPMISPLLTGTALGF), 227–247 (SIVLVASNIPMKDLVVSVLIF), and 261–281 (IASVVLLVSFAILLIINYIYL). Residues 73–276 (YKVTFLTAAL…LVSFAILLII (204 aa)) enclose the ABC transmembrane type-1 domain.

The protein belongs to the binding-protein-dependent transport system permease family. CysTW subfamily.

Its subcellular location is the plastid. It localises to the chloroplast membrane. Its function is as follows. Part of the ABC transporter complex cysAWTP (TC 3.A.1.6.1) involved in sulfate/thiosulfate import. Probably responsible for the translocation of the substrate across the membrane. This chain is Probable sulfate transport system permease protein cysT (cysT), found in Zygnema circumcarinatum (Green alga).